The chain runs to 108 residues: Large ribosomal subunit protein eL32 (108 aa).

Over residues 21-30 (RRPRGRTSKM) the composition is skewed to basic residues. Residues 21-44 (RRPRGRTSKMRRYEKGKPAMPAIG) are disordered.

The protein belongs to the eukaryotic ribosomal protein eL32 family.

This chain is Large ribosomal subunit protein eL32 (rpl32e), found in Methanothermobacter thermautotrophicus (strain ATCC 29096 / DSM 1053 / JCM 10044 / NBRC 100330 / Delta H) (Methanobacterium thermoautotrophicum).